Consider the following 814-residue polypeptide: MKKQFNRMRQLANQTVGRAEKTEVLSEDLLQVEKRLELVKQVSHSTHKKLTACLQGQQGAEADKRSKKLPLTTLAQCLVEGSAILGDDTLLGKMLKLCGETEDKLAQELIHFELQVERDVIEPLFLLAEVEIPNIQKQRKHLAKLVLDMDSSRTRWQQTSKSSGLSSSLQPAGAKADALREEMEEAANRVEICRDQLSADMYSFVAKEIDYANYFQTLIEVQAEYHRKSLTLLQAVLPQIKAQQEAWVEKPSFGKPLEEHLMISGREIAFPIEACVTMLLECGMQEEGLFRVAPSASKLKKLKAALDCCVVDVQEYSADPHAIAGALKSYLRELPEPLMTFELYDEWIQASNIQEQDKRLQALWNACEKLPKANHNNIKYLIKFLSKLSEYQDVNKMTPSNMAIVLGPNLLWPQSEGNITEMMTTVSLQIVGIIEPIIQHADWFFPGEIEFNLTGSYGSPVHVNHNANYSSMPSPDMDPADRRQPEQARRPLSVATDNMMLEFYKKDGLRKIQSMGVRVMDTSWVARRGSSAGRKASCAPPSMQPPAPPSELAAPLPSPLPEQVPDSPATPAPALSPSGASLQPTPERPSVSKSKELSPGSGQKGSPGSIQGTPCPGTQLGPQPAASPSQLPADQSPHTLRKVSKKVAPIPPKVPFVQPGTVSDQPVGQPSPVSLSPTPPSTPSPYGLSYPPGYSMASGQLSPASAPPLASPSVFTSTLAKSRPTPKPRQRPTLPPPQPPSVSLSASSPQSTEHPMLDGMSPGESMSTDLVHFDVPSIHIELGSTLRLSPLEHARRHSATDKRDSEEESESTAL.

The 236-residue stretch at Q14–E249 folds into the BAR domain. A Rho-GAP domain is found at K255 to F445. Disordered regions lie at residues A467–S493, R528–D769, and S784–L814. Residues P479–R489 are compositionally biased toward basic and acidic residues. Phosphoserine is present on S493. 5 stretches are compositionally biased toward low complexity: residues S567–S581, S598–G612, P622–P637, S684–A704, and S741–T752. The interaction with BST2 stretch occupies residues K727–L814. Basic and acidic residues predominate over residues P790–S805. S805 bears the Phosphoserine mark. The PDZ-binding signature appears at S811–L814.

Interacts with BST2 (via cytoplasmic domain). Interacts (probably via PDZ-binding motif) with SHANK3 (via PDZ domain); the interaction takes place in dendritic spines and promotes GRIA1 exocytosis. Specifically expressed in brain (at protein level). Detected in olfactory bulb, cortex, hippocampus, diencephalon and cerebellum (at protein level). Expressed in hippocampal neurons (at protein level).

The protein localises to the cell projection. It localises to the dendritic spine. Its subcellular location is the recycling endosome. The protein resides in the presynapse. It is found in the dendrite. Its function is as follows. GTPase-activating protein (GAP) that stimulates the GTPase activity of Rho-type GTPases. Thereby, controls Rho-type GTPases cycling between their active GTP-bound and inactive GDP-bound states. Acts as a GAP at least for CDC42 and RAC1. In neurons, is involved in dendritic spine formation and synaptic plasticity in a specific RAC1-GAP activity. Limits the initiation of exploratory dendritic filopodia. Recruited to actin-patches that seed filopodia, binds specifically to plasma membrane sections that are deformed inward by acto-myosin mediated contractile forces. Acts through GAP activity on RAC1 to reduce actin polymerization necessary for filopodia formation. In association with SHANK3, promotes GRIA1 exocytosis from recycling endosomes and spine morphological changes associated to long-term potentiation. The protein is Rho GTPase-activating protein 44 of Mus musculus (Mouse).